A 157-amino-acid polypeptide reads, in one-letter code: uncharacterized protein (157 aa).

A helical membrane pass occupies residues 42 to 64 (SCIRLIVMFICVAMITCPNSLRF).

It is found in the membrane. This is an uncharacterized protein from Saccharomyces cerevisiae (strain ATCC 204508 / S288c) (Baker's yeast).